Consider the following 62-residue polypeptide: Prokaryotic ubiquitin-like protein Pup 2 (62 aa).

Residues 1-34 are disordered; the sequence is MRQEKPKRHGREDDEPPEPAPAGRARDTTVGDDT. The segment at 21-56 is ARC ATPase binding; sequence PAGRARDTTVGDDTDELLDEIDGVLEENAVEFVRSY. Residue E62 forms an Isoglutamyl lysine isopeptide (Glu-Lys) (interchain with K-? in acceptor proteins) linkage.

It belongs to the prokaryotic ubiquitin-like protein family. As to quaternary structure, strongly interacts with the proteasome-associated ATPase ARC through a hydrophobic interface; the interacting region of Pup lies in its C-terminal half. There is one Pup binding site per ARC hexamer ring.

It functions in the pathway protein degradation; proteasomal Pup-dependent pathway. Functionally, protein modifier that is covalently attached to lysine residues of substrate proteins, thereby targeting them for proteasomal degradation. The tagging system is termed pupylation. The sequence is that of Prokaryotic ubiquitin-like protein Pup 2 from Saccharopolyspora erythraea (strain ATCC 11635 / DSM 40517 / JCM 4748 / NBRC 13426 / NCIMB 8594 / NRRL 2338).